A 322-amino-acid chain; its full sequence is Secreted effector protein SseI (322 aa).

In terms of assembly, interacts with host IQGAP1 and host TRIP6 (thyroid receptor-interacting protein 6).

It is found in the secreted. Its subcellular location is the host cytoplasm. Effector proteins function to alter host cell physiology and promote bacterial survival in host tissues. This protein is required to maintain a long-term chronic systemic infection in mice. It inhibits normal cell migration of primary macrophages and dendritic cells, by a mechanism that involves interaction with the host factor IQGAP1, an important regulator of the cytoskeleton and cell migration. Also accelerates the systemic spread of infection from the gastrointestinal tract to the bloodstream, probably by interacting with host TRIP6. The polypeptide is Secreted effector protein SseI (sseI) (Salmonella typhimurium (strain LT2 / SGSC1412 / ATCC 700720)).